Consider the following 238-residue polypeptide: Flagellar L-ring protein (238 aa).

Positions 1–16 are cleaved as a signal peptide; that stretch reads MRKLILISLCIFFLAS. Cys-17 carries the N-palmitoyl cysteine lipid modification. Residue Cys-17 is the site of S-diacylglycerol cysteine attachment.

This sequence belongs to the FlgH family. As to quaternary structure, the basal body constitutes a major portion of the flagellar organelle and consists of four rings (L,P,S, and M) mounted on a central rod.

The protein localises to the cell outer membrane. It localises to the bacterial flagellum basal body. In terms of biological role, assembles around the rod to form the L-ring and probably protects the motor/basal body from shearing forces during rotation. In Thermodesulfovibrio yellowstonii (strain ATCC 51303 / DSM 11347 / YP87), this protein is Flagellar L-ring protein.